The chain runs to 148 residues: Deoxyuridine 5'-triphosphate nucleotidohydrolase (148 aa).

Substrate-binding positions include 68 to 70 (RSG), asparagine 81, 85 to 87 (TVD), and lysine 95.

It belongs to the dUTPase family. Requires Mg(2+) as cofactor.

The catalysed reaction is dUTP + H2O = dUMP + diphosphate + H(+). It functions in the pathway pyrimidine metabolism; dUMP biosynthesis; dUMP from dCTP (dUTP route): step 2/2. This enzyme is involved in nucleotide metabolism: it produces dUMP, the immediate precursor of thymidine nucleotides and it decreases the intracellular concentration of dUTP so that uracil cannot be incorporated into DNA. The polypeptide is Deoxyuridine 5'-triphosphate nucleotidohydrolase (Caldanaerobacter subterraneus subsp. tengcongensis (strain DSM 15242 / JCM 11007 / NBRC 100824 / MB4) (Thermoanaerobacter tengcongensis)).